A 150-amino-acid chain; its full sequence is Putative antitoxin VapB45 (150 aa).

A disordered region spans residues 124-150 (AQRPVAAGRPRPRPQRPVSDRVSDQRR). Residues 141–150 (VSDRVSDQRR) are compositionally biased toward basic and acidic residues.

This sequence belongs to the phD/YefM antitoxin family.

In terms of biological role, possibly the antitoxin component of a type II toxin-antitoxin (TA) system. Its cognate toxin is VapC45 (Potential). The protein is Putative antitoxin VapB45 (vapB45) of Mycobacterium tuberculosis (strain CDC 1551 / Oshkosh).